A 465-amino-acid chain; its full sequence is Kinesin-like protein KIN-1 (465 aa).

Positions 3–334 (NVTVCARFRP…LRFGMRAKHI (332 aa)) constitute a Kinesin motor domain. 87-94 (GQTGAGKT) provides a ligand contact to ATP. The segment at 338–358 (PRASEVKSAKAQEEPSSVTKD) is disordered. Over residues 341–358 (SEVKSAKAQEEPSSVTKD) the composition is skewed to basic and acidic residues. Residues 402-444 (VYEDIVSKTIQSLQQAVDELQQKVKKLEAENIGIQEQALRNHE) adopt a coiled-coil conformation.

It belongs to the TRAFAC class myosin-kinesin ATPase superfamily. Kinesin family. KIN-1 subfamily. As to quaternary structure, homodimer. Interacts with WIP1 and WIP2. Specifically expressed in ovules and anthers.

Functionally, kinesin-like motor protein that promotes synapsis and is required for proper crossover distribution in meiosis. Plays a role in the nuclear division cycles during megagametogenesis. In Arabidopsis thaliana (Mouse-ear cress), this protein is Kinesin-like protein KIN-1.